The chain runs to 169 residues: Secreted RxLR effector protein BLN03 (169 aa).

An N-terminal signal peptide occupies residues Met-1–Ala-21. The short motif at Thr-51–Arg-54 is the dEER element. Residues Gly-149–Val-169 form a helical membrane-spanning segment.

This sequence belongs to the RxLR effector family. Interacts with host transcription factor NAC069.

Its subcellular location is the secreted. The protein localises to the host membrane. Secreted effector that inhibits stress-induced relocalization of the endoplasmic reticulum tail-anchored transcription factors to the nucleus, thus affecting stress responses. The chain is Secreted RxLR effector protein BLN03 from Bremia lactucae (Lettuce downy mildew).